The primary structure comprises 308 residues: Aspartate carbamoyltransferase catalytic subunit (308 aa).

Carbamoyl phosphate-binding residues include Arg-58 and Thr-59. Lys-86 is an L-aspartate binding site. The carbamoyl phosphate site is built by Arg-108, His-136, and Gln-139. Arg-169 and Arg-227 together coordinate L-aspartate. The carbamoyl phosphate site is built by Gly-268 and Pro-269.

Belongs to the aspartate/ornithine carbamoyltransferase superfamily. ATCase family. In terms of assembly, heterododecamer (2C3:3R2) of six catalytic PyrB chains organized as two trimers (C3), and six regulatory PyrI chains organized as three dimers (R2).

It catalyses the reaction carbamoyl phosphate + L-aspartate = N-carbamoyl-L-aspartate + phosphate + H(+). Its pathway is pyrimidine metabolism; UMP biosynthesis via de novo pathway; (S)-dihydroorotate from bicarbonate: step 2/3. Its function is as follows. Catalyzes the condensation of carbamoyl phosphate and aspartate to form carbamoyl aspartate and inorganic phosphate, the committed step in the de novo pyrimidine nucleotide biosynthesis pathway. The sequence is that of Aspartate carbamoyltransferase catalytic subunit from Chloroflexus aurantiacus (strain ATCC 29366 / DSM 635 / J-10-fl).